Consider the following 272-residue polypeptide: Dihydropteroate synthase (272 aa).

The Pterin-binding domain occupies 1–256; sequence MIKTKIMGIL…NVLLNTRLAQ (256 aa). A Mg(2+)-binding site is contributed by Asn11. (7,8-dihydropterin-6-yl)methyl diphosphate-binding positions include Thr51, Asp89, Asn108, Asp172, Lys208, and 244–246; that span reads RVH.

Belongs to the DHPS family. Homodimer. Mg(2+) is required as a cofactor.

The catalysed reaction is (7,8-dihydropterin-6-yl)methyl diphosphate + 4-aminobenzoate = 7,8-dihydropteroate + diphosphate. It functions in the pathway cofactor biosynthesis; tetrahydrofolate biosynthesis; 7,8-dihydrofolate from 2-amino-4-hydroxy-6-hydroxymethyl-7,8-dihydropteridine diphosphate and 4-aminobenzoate: step 1/2. In terms of biological role, catalyzes the condensation of para-aminobenzoate (pABA) with 6-hydroxymethyl-7,8-dihydropterin diphosphate (DHPt-PP) to form 7,8-dihydropteroate (H2Pte), the immediate precursor of folate derivatives. The sequence is that of Dihydropteroate synthase (folP) from Staphylococcus epidermidis (strain ATCC 12228 / FDA PCI 1200).